Reading from the N-terminus, the 83-residue chain is MVCLPCIFLPIMMAIYMKFIMPYVYRFLPERWVHFLDPILYPTCPMKIPEQEKKEEEEEKEKSCCSTEAENTTEVTTETKKDQ.

A disordered region spans residues 51-83; that stretch reads QEKKEEEEEKEKSCCSTEAENTTEVTTETKKDQ. Residues 67–76 are compositionally biased toward low complexity; the sequence is TEAENTTEVT.

Belongs to the UPF0729 family.

The polypeptide is UPF0729 protein CBG02799 (Caenorhabditis briggsae).